A 301-amino-acid polypeptide reads, in one-letter code: t-SNARE affecting a late Golgi compartment protein 2 (301 aa).

Over Met-1–Arg-279 the chain is Cytoplasmic. Positions Ser-92–Gln-120 form a coiled coil. The t-SNARE coiled-coil homology domain occupies Asp-206–Ala-268. The helical; Anchor for type IV membrane protein transmembrane segment at Phe-280 to Leu-300 threads the bilayer. Arg-301 is a topological domain (vesicular).

This sequence belongs to the syntaxin family.

The protein resides in the golgi apparatus. It localises to the trans-Golgi network membrane. The protein localises to the endosome membrane. Functionally, t-SNARE that functions in transport from the endosome to the late Golgi and on the endocytic pathway. The protein is t-SNARE affecting a late Golgi compartment protein 2 (tlg2) of Schizosaccharomyces pombe (strain 972 / ATCC 24843) (Fission yeast).